We begin with the raw amino-acid sequence, 487 residues long: N-succinylglutamate 5-semialdehyde dehydrogenase (487 aa).

Residue 221 to 226 participates in NAD(+) binding; sequence GSSRTG. Catalysis depends on residues glutamate 244 and cysteine 278.

This sequence belongs to the aldehyde dehydrogenase family. AstD subfamily.

It catalyses the reaction N-succinyl-L-glutamate 5-semialdehyde + NAD(+) + H2O = N-succinyl-L-glutamate + NADH + 2 H(+). Its pathway is amino-acid degradation; L-arginine degradation via AST pathway; L-glutamate and succinate from L-arginine: step 4/5. In terms of biological role, catalyzes the NAD-dependent reduction of succinylglutamate semialdehyde into succinylglutamate. In Pseudomonas putida (strain ATCC 47054 / DSM 6125 / CFBP 8728 / NCIMB 11950 / KT2440), this protein is N-succinylglutamate 5-semialdehyde dehydrogenase.